The following is a 97-amino-acid chain: Co-chaperonin GroES (97 aa).

It belongs to the GroES chaperonin family. As to quaternary structure, heptamer of 7 subunits arranged in a ring. Interacts with the chaperonin GroEL.

It is found in the cytoplasm. Together with the chaperonin GroEL, plays an essential role in assisting protein folding. The GroEL-GroES system forms a nano-cage that allows encapsulation of the non-native substrate proteins and provides a physical environment optimized to promote and accelerate protein folding. GroES binds to the apical surface of the GroEL ring, thereby capping the opening of the GroEL channel. In Buchnera aphidicola subsp. Pterocomma populeum, this protein is Co-chaperonin GroES.